The following is a 294-amino-acid chain: MKQLTLAKTVKGVGIGLHKGEPIEITLEPLEANSGIVFFRSDLNASYKASPENVINTQMATVLGDDRGFISTIEHLMSAINAYGIDNVRIVLNANEAPVMDGSSISFCMMLDEAGVKELDAPKKIMVIKKPIEVRDGNKFVRLTPTKEPRINYTIKFDNAVIGEQSYNFEFSKKNYIENIARARTFGFLKDVQALRSMNLALGGSLENTIVVDENRILNPEGLRFKDEFVRHKILDAIGDLTLLGYRVFGDYTSYAGSHHLNHLLTKEVLKDKDAYEIVSLEKTTQKAYEKVFA.

Positions 75, 232, and 236 each coordinate Zn(2+). Residue H259 is the Proton donor of the active site.

The protein belongs to the LpxC family. Zn(2+) is required as a cofactor.

The catalysed reaction is a UDP-3-O-[(3R)-3-hydroxyacyl]-N-acetyl-alpha-D-glucosamine + H2O = a UDP-3-O-[(3R)-3-hydroxyacyl]-alpha-D-glucosamine + acetate. The protein operates within glycolipid biosynthesis; lipid IV(A) biosynthesis; lipid IV(A) from (3R)-3-hydroxytetradecanoyl-[acyl-carrier-protein] and UDP-N-acetyl-alpha-D-glucosamine: step 2/6. Functionally, catalyzes the hydrolysis of UDP-3-O-myristoyl-N-acetylglucosamine to form UDP-3-O-myristoylglucosamine and acetate, the committed step in lipid A biosynthesis. In Campylobacter jejuni subsp. jejuni serotype O:2 (strain ATCC 700819 / NCTC 11168), this protein is UDP-3-O-acyl-N-acetylglucosamine deacetylase.